We begin with the raw amino-acid sequence, 735 residues long: uncharacterized protein (735 aa).

Positions 25–175 (DLSCLSPDLL…CIAAVLAGLL (151 aa)) constitute a GAF domain. The PAS domain occupies 185-255 (SEAARRAMLD…RQGFMRHLAT (71 aa)). Residues 263–313 (RLVEVEALRADGSVFPAELTVNEHRAGGRRLFSAFVRDISDRITSRRALER) enclose the PAC domain. The GGDEF domain occupies 342-464 (GAVVLMLRDL…DGHLLHFAEH (123 aa)). The EAL domain occupies 472–732 (RLELEMALRD…VAGTLPETLA (261 aa)).

This is an uncharacterized protein from Azorhizobium caulinodans (strain ATCC 43989 / DSM 5975 / JCM 20966 / LMG 6465 / NBRC 14845 / NCIMB 13405 / ORS 571).